Reading from the N-terminus, the 393-residue chain is Lipid-A-disaccharide synthase (393 aa).

The protein belongs to the LpxB family.

The catalysed reaction is a lipid X + a UDP-2-N,3-O-bis[(3R)-3-hydroxyacyl]-alpha-D-glucosamine = a lipid A disaccharide + UDP + H(+). It functions in the pathway bacterial outer membrane biogenesis; LPS lipid A biosynthesis. Condensation of UDP-2,3-diacylglucosamine and 2,3-diacylglucosamine-1-phosphate to form lipid A disaccharide, a precursor of lipid A, a phosphorylated glycolipid that anchors the lipopolysaccharide to the outer membrane of the cell. The sequence is that of Lipid-A-disaccharide synthase from Actinobacillus pleuropneumoniae serotype 5b (strain L20).